The sequence spans 149 residues: Glutamate mutase sigma subunit (149 aa).

Residues Asp-5 to Asp-138 form the B12-binding domain. Adenosylcob(III)alamin contacts are provided by residues Ser-15–Ala-19, His-18, Ser-63–Leu-65, and Asn-94–Gly-98.

The protein belongs to the methylaspartate mutase GlmS subunit family. As to quaternary structure, heterotetramer composed of 2 epsilon subunits (GlmE) and 2 sigma subunits (GlmS). GlmE exists as a homodimer and GlmS as a monomer. It depends on adenosylcob(III)alamin as a cofactor.

The enzyme catalyses (2S,3S)-3-methyl-L-aspartate = L-glutamate. It participates in amino-acid degradation; L-glutamate degradation via mesaconate pathway; acetate and pyruvate from L-glutamate: step 1/4. Its function is as follows. Catalyzes the carbon skeleton rearrangement of L-glutamate to L-threo-3-methylaspartate ((2S,3S)-3-methylaspartate). In Halobacterium salinarum (strain ATCC 700922 / JCM 11081 / NRC-1) (Halobacterium halobium), this protein is Glutamate mutase sigma subunit.